The primary structure comprises 1829 residues: Protein TIC 214 (1829 aa).

6 helical membrane passes run 18–38 (IINS…FSIG), 67–87 (FIAG…HLAL), 90–110 (PHTI…WNNP), 127–147 (LSIQ…HFLL), 174–194 (FVGW…VLVW), and 224–244 (IFSI…PSPI). Over residues 260–272 (RDVEIEKTFERGG) the composition is skewed to basic and acidic residues. Residues 260 to 301 (RDVEIEKTFERGGTKQGQEVSAEEDPSPSLFSEEKEDPDKIE) are disordered.

It belongs to the TIC214 family. Part of the Tic complex.

It localises to the plastid. Its subcellular location is the chloroplast inner membrane. Its function is as follows. Involved in protein precursor import into chloroplasts. May be part of an intermediate translocation complex acting as a protein-conducting channel at the inner envelope. The chain is Protein TIC 214 from Citrus sinensis (Sweet orange).